The primary structure comprises 601 residues: Probable translation initiation factor IF-2 (601 aa).

The 216-residue stretch at 14–229 (LRTPIVAVLG…VMMGLSQRYM (216 aa)) folds into the tr-type G domain. Residues 23–30 (GHVDHGKT) are G1. 23-30 (GHVDHGKT) is a GTP binding site. The G2 stretch occupies residues 48–52 (AITQH). A G3 region spans residues 85–88 (DTPG). GTP is bound by residues 85 to 89 (DTPGH) and 139 to 142 (NKID). Residues 139–142 (NKID) form a G4 region. Residues 207–209 (SAE) are G5.

Belongs to the TRAFAC class translation factor GTPase superfamily. Classic translation factor GTPase family. IF-2 subfamily.

Functionally, function in general translation initiation by promoting the binding of the formylmethionine-tRNA to ribosomes. Seems to function along with eIF-2. The polypeptide is Probable translation initiation factor IF-2 (Haloarcula marismortui (strain ATCC 43049 / DSM 3752 / JCM 8966 / VKM B-1809) (Halobacterium marismortui)).